The primary structure comprises 240 residues: Glutamine transport ATP-binding protein GlnQ (240 aa).

In terms of domain architecture, ABC transporter spans 2–236; sequence IEFKNVSKHF…PPSQRLQEFL (235 aa). 34 to 41 lines the ATP pocket; that stretch reads GPSGSGKS.

Belongs to the ABC transporter superfamily. As to quaternary structure, heterotetramer with 2 subunits of GlnQ and 2 subunits of GlnP.

Its subcellular location is the cell inner membrane. In terms of biological role, part of the binding-protein-dependent transport system for glutamine. Probably responsible for energy coupling to the transport system. The sequence is that of Glutamine transport ATP-binding protein GlnQ (glnQ) from Escherichia coli (strain K12).